The following is a 668-amino-acid chain: MASAATIETEKYSLLEDFNVDVEVDDEEYESFSLCFWVYLLNSTTFPSTIIRQVHSDMSVSAPFLVLDENKKMMLLPLTLLHKEAPDPVDTSSWTQVPSVSTKSKFPLEKWVHVGCEVSRNFMRLFIDGNMEGEQFVTSLLTKNAYPECPRKISLFSVGGDGYSVQGFIQCAEVLPASDHVEHHYMKDPPLMLSVNKSSSSGIKLDDCGVWQASCKEMFSLDVLLSNAIGQPVHKDVEVVASLLYADTLPEAKMGEAEAPLLIRDEGVQFSSDDRPIKLLNGRSSFKLKISQLSSNSDDRLFWIKFGIRNAKDYPFLQAVSNPIRCISVSPEVQPVSVTPKRLTNIDHLSSTESPDLLQNTSSVKRIRLGKESVSGSEESYQQCNSHPQTSRQFENGNGMRLHEEDNSSIDSENSEMRYTISDSTIFKYCLGNLIDKALLLKEITNNSSDDEVLEFANQVSLYSGCSHHSYQINMARELIAEGTNAWILISRNNQHVHWDNVVYEIEEHFMRISKCSSRSLTHQDFELLRRISGCYEYITQENFEKMWCWLFPVAYSISRGLINGMWRSSSPKWIEGFITKEEAEHSLQGQEPGTFILRFPISRTWPHPDAGSLVVTYVGHDFALHHKQLKIDNICESSERYMDAKPLQDMLLAEPELSRLGRIKRSH.

Residues 373 to 411 form a disordered region; it reads SVSGSEESYQQCNSHPQTSRQFENGNGMRLHEEDNSSID. The segment covering 374-396 has biased composition (polar residues); the sequence is VSGSEESYQQCNSHPQTSRQFEN. Residues 574-642 form the SH2 domain; it reads WIEGFITKEE…DNICESSERY (69 aa).

In terms of processing, phosphorylated on tyrosine residues. As to expression, expressed in roots, leaves, stems and flowers.

The sequence is that of SH2 domain-containing protein B from Arabidopsis thaliana (Mouse-ear cress).